We begin with the raw amino-acid sequence, 274 residues long: Large ribosomal subunit protein uL2cz/uL2cy (274 aa).

Positions 1–15 (MAINLYKTSTPSTRN) are enriched in polar residues. Disordered stretches follow at residues 1–22 (MAIN…DSQV) and 225–274 (PVDH…RRSK).

This sequence belongs to the universal ribosomal protein uL2 family. As to quaternary structure, part of the 50S ribosomal subunit.

Its subcellular location is the plastid. It is found in the chloroplast. The polypeptide is Large ribosomal subunit protein uL2cz/uL2cy (rpl2-A) (Lobularia maritima (Sweet alyssum)).